Here is a 252-residue protein sequence, read N- to C-terminus: Trans-aconitate 2-methyltransferase (252 aa).

This sequence belongs to the methyltransferase superfamily. Tam family.

The protein localises to the cytoplasm. It catalyses the reaction trans-aconitate + S-adenosyl-L-methionine = (E)-3-(methoxycarbonyl)pent-2-enedioate + S-adenosyl-L-homocysteine. Functionally, catalyzes the S-adenosylmethionine monomethyl esterification of trans-aconitate. In Escherichia coli O7:K1 (strain IAI39 / ExPEC), this protein is Trans-aconitate 2-methyltransferase.